Reading from the N-terminus, the 662-residue chain is UPF0313 protein CPF_1407 (662 aa).

The 272-residue stretch at 296 to 567 (AIEEVKFSIV…AMQRALLQFK (272 aa)) folds into the Radical SAM core domain. Residues cysteine 310, cysteine 314, and cysteine 317 each coordinate [4Fe-4S] cluster. Residues 596 to 662 (IRDKNSFGKG…QRSSKGKKRR (67 aa)) form a disordered region. Over residues 618 to 632 (SRNENSGRRESEDKK) the composition is skewed to basic and acidic residues. Over residues 633 to 644 (RSSHSKKQRGNK) the composition is skewed to basic residues.

The protein belongs to the UPF0313 family. It depends on [4Fe-4S] cluster as a cofactor.

The protein is UPF0313 protein CPF_1407 of Clostridium perfringens (strain ATCC 13124 / DSM 756 / JCM 1290 / NCIMB 6125 / NCTC 8237 / Type A).